Here is a 1251-residue protein sequence, read N- to C-terminus: Insulin receptor substrate 1 (1251 aa).

Phosphoserine is present on Ser3. The tract at residues 3–137 is mediates interaction with PHIP; it reads SPPESDGFSD…GAGGGGGSCS (135 aa). A PH domain is found at 12-115; sequence DVRKVGYLRK…WYQALLQLHN (104 aa). Phosphoserine; by CK2 is present on Ser99. The 105-residue stretch at 160–264 folds into the IRS-type PTB domain; the sequence is FKEVWQVILK…EAMRAMSDEF (105 aa). The segment at 262-430 is disordered; it reads DEFRPRSKSQ…SDGGFISSDE (169 aa). A compositionally biased stretch (low complexity) spans 269 to 281; the sequence is KSQSSSNCSNPIS. Residue Ser270 is modified to Phosphoserine. Ser307 bears the Phosphoserine; by RPS6KB1 mark. A Phosphoserine; by IKKB, MAPK8 and RPS6KB1 modification is found at Ser312. Ser323, Ser330, Ser345, and Ser348 each carry phosphoserine. Residues 354–363 are compositionally biased toward basic residues; sequence THAHRHRGSA. 2 stretches are compositionally biased toward low complexity: residues 383–404 and 412–424; these read SPSATSPVSLSSSSTSGHGSTS and SSASVSGSPSDGG. Residue Ser419 is modified to Phosphoserine. Residues Thr446 and Thr453 each carry the phosphothreonine modification. Tyr465 is subject to Phosphotyrosine; by INSR. The YXXM motif 1 motif lies at 465 to 468; the sequence is YICM. The tract at residues 494–513 is disordered; the sequence is YTPGTGLGTSPALAGDEASS. Residue Ser527 is modified to Phosphoserine; by RPS6KB1. A YXXM motif 2 motif is present at residues 551 to 554; sequence YTEM. The span at 594–610 shows a compositional bias: basic and acidic residues; the sequence is RRGGHHRPDSSTLHTDD. Residues 594–616 are disordered; that stretch reads RRGGHHRPDSSTLHTDDGYMPMS. Tyr612 carries the phosphotyrosine; by INSR modification. Positions 612 to 615 match the YXXM motif 3 motif; that stretch reads YMPM. A Phosphoserine modification is found at Ser629. Position 632 is a phosphotyrosine; by INSR (Tyr632). The YXXM motif 4 signature appears at 632–635; the sequence is YMPM. Residue Ser636 is modified to Phosphoserine; by RPS6KB1. Residue Tyr662 is modified to Phosphotyrosine. A YXXM motif 5 motif is present at residues 662–665; it reads YMMM. Residues 668–692 are disordered; sequence SGGCSPDIGGGPSSSSSSTVPSGSS. A YXXM motif 6 motif is present at residues 730-733; that stretch reads YMNM. Disordered stretches follow at residues 734–753 and 769–946; these read SPVGDSNTSSPSDCYYGPED and FKHT…EETG. Positions 774 to 783 are enriched in basic and acidic residues; that stretch reads RPGEPEEGAR. Residue Ser792 is modified to Phosphoserine; by AMPK and SIK2. Composition is skewed to low complexity over residues 799–813 and 875–891; these read AATADDSSSSTSSDS and QQQQQQQQQQQQQQQQQ. Position 901 is a phosphoserine (Ser901). Tyr905 is modified (phosphotyrosine; by INSR). The segment at 905-907 is GRB2-binding; sequence YVN. The span at 924-937 shows a compositional bias: polar residues; it reads SRSSPSVRCPSQLQ. Phosphotyrosine; by INSR is present on residues Tyr950 and Tyr998. 3 consecutive short sequence motifs (YXXM motif) follow at residues 950-953, 998-1001, and 1021-1024; these read YMKM, YMTM, and YADM. Disordered regions lie at residues 1091–1124 and 1130–1149; these read NQSAKVIRADPQGCRRRHSSETFSSTPSATRVGN and AGAAIGGSGGSSSSSEDVKR. Phosphoserine is present on residues Ser1109 and Ser1110. Positions 1111 to 1123 are enriched in polar residues; it reads ETFSSTPSATRVG. Tyr1188 is subject to Phosphotyrosine; by INSR. Lys1195 participates in a covalent cross-link: Glycyl lysine isopeptide (Lys-Gly) (interchain with G-Cter in ubiquitin). The interval 1195–1251 is disordered; that stretch reads KDFKQRPQECTPQPQPPPPPPPHQPLGSSESSSTRRSSEDLSAYASISFQKQPEDLQ. Residues 1207 to 1218 are compositionally biased toward pro residues; it reads QPQPPPPPPPHQ. Residue Tyr1238 is modified to Phosphotyrosine; by INSR.

In terms of assembly, interacts with UBTF and PIK3CA. Interacts (via phosphorylated YXXM motifs) with PIK3R1. Interacts with ROCK1 and FER. Interacts (via PH domain) with PHIP. Interacts with GRB2. Interacts with SOCS7. Interacts (via IRS-type PTB domain) with IGF1R and INSR (via the tyrosine-phosphorylated NPXY motif). Interacts with ALK. Interacts with EIF2AK2/PKR. Interacts with GKAP1. Interacts with DGKZ in the absence of insulin; insulin stimulation decreases this interaction. Found in a ternary complex with DGKZ and PIP5K1A in the absence of insulin stimulation. Interacts with SQSTM1; the interaction is disrupted by the presence of tensin TNS2. Interacts with NCK1 (via SH2 domain). Interacts with NCK2 (via SH3 domain). Interacts with SH2B1; this interaction enhances leptin-induced activation of the PI3-kinase pathway. Interacts with DVL2; this interaction promotes the Wnt/beta-catenin signaling pathway. Interacts with JAK1. In terms of processing, serine phosphorylation of IRS1 is a mechanism for insulin resistance. Ser-312 phosphorylation inhibits insulin action through disruption of IRS1 interaction with the insulin receptor. Phosphorylation of Tyr-905 is required for GRB2-binding. Phosphorylated by ALK. Phosphorylated at Ser-270, Ser-307, Ser-636 and Ser-1109 by RPS6KB1; phosphorylation induces accelerated degradation of IRS1. Phosphorylated on tyrosine residues in response to insulin. In skeletal muscles, dephosphorylated on Tyr-612 by TNS2 under anabolic conditions; dephosphorylation results in the proteasomal degradation of IRS1. Post-translationally, ubiquitinated by the Cul7-RING(FBXW8) complex in a mTOR-dependent manner, leading to its degradation: the Cul7-RING(FBXW8) complex recognizes and binds IRS1 previously phosphorylated by S6 kinase (RPS6KB1 or RPS6KB2). Ubiquitinated by TRAF4 through 'Lys-29' linkage; this ubiquitination regulates the interaction of IRS1 with IGFR and IRS1 tyrosine phosphorylation upon IGF1 stimulation. S-nitrosylation at by BLVRB inhibits its activity.

The protein localises to the cytoplasm. It is found in the nucleus. In terms of biological role, signaling adapter protein that participates in the signal transduction from two prominent receptor tyrosine kinases, insulin receptor/INSR and insulin-like growth factor I receptor/IGF1R. Plays therefore an important role in development, growth, glucose homeostasis as well as lipid metabolism. Upon phosphorylation by the insulin receptor, functions as a signaling scaffold that propagates insulin action through binding to SH2 domain-containing proteins including the p85 regulatory subunit of PI3K, NCK1, NCK2, GRB2 or SHP2. Recruitment of GRB2 leads to the activation of the guanine nucleotide exchange factor SOS1 which in turn triggers the Ras/Raf/MEK/MAPK signaling cascade. Activation of the PI3K/AKT pathway is responsible for most of insulin metabolic effects in the cell, and the Ras/Raf/MEK/MAPK is involved in the regulation of gene expression and in cooperation with the PI3K pathway regulates cell growth and differentiation. Acts a positive regulator of the Wnt/beta-catenin signaling pathway through suppression of DVL2 autophagy-mediated degradation leading to cell proliferation. The protein is Insulin receptor substrate 1 (IRS1) of Chlorocebus aethiops (Green monkey).